A 183-amino-acid chain; its full sequence is NAD(P)H-quinone oxidoreductase subunit J (183 aa).

Residues 1–21 are disordered; that stretch reads MAEENAQEKQAPPSAGEQSEP.

The protein belongs to the complex I 30 kDa subunit family. NDH-1 can be composed of about 15 different subunits; different subcomplexes with different compositions have been identified which probably have different functions.

It localises to the cellular thylakoid membrane. The catalysed reaction is a plastoquinone + NADH + (n+1) H(+)(in) = a plastoquinol + NAD(+) + n H(+)(out). It carries out the reaction a plastoquinone + NADPH + (n+1) H(+)(in) = a plastoquinol + NADP(+) + n H(+)(out). Its function is as follows. NDH-1 shuttles electrons from an unknown electron donor, via FMN and iron-sulfur (Fe-S) centers, to quinones in the respiratory and/or the photosynthetic chain. The immediate electron acceptor for the enzyme in this species is believed to be plastoquinone. Couples the redox reaction to proton translocation, and thus conserves the redox energy in a proton gradient. Cyanobacterial NDH-1 also plays a role in inorganic carbon-concentration. In Synechococcus sp. (strain JA-2-3B'a(2-13)) (Cyanobacteria bacterium Yellowstone B-Prime), this protein is NAD(P)H-quinone oxidoreductase subunit J.